A 165-amino-acid polypeptide reads, in one-letter code: Fibrinogen-binding protein (165 aa).

The first 29 residues, 1–29 (MKNKLIAKSLLTIAAIGITTTTIASTADA), serve as a signal peptide directing secretion.

In terms of assembly, interacts with host fibrinogen alpha chain/FGA. Interacts with host complement protein C3.

It is found in the secreted. Functionally, extracellular fibrinogen-binding protein that plays an important role in virulence. By interacting with the alpha chain of fibrinogen and its derivative fibrin, enhances a non-functional interaction between fibrinogen and platelets and is responsible for repression of fibrinogen-dependent platelet aggregation. In addition, assembles a fibrinogen protective shield around the bacteria which results in impaired phagocytic clearance by the host. Mechanistically, interacts with host complement C3b deposited on the surface of the bacterium via its C-terminal and then recruits fibrinogen via its N-terminal. The polypeptide is Fibrinogen-binding protein (fib) (Staphylococcus aureus).